We begin with the raw amino-acid sequence, 240 residues long: 14-3-3 protein 3 (240 aa).

The protein belongs to the 14-3-3 family. As to quaternary structure, interacts with coactosin. Interacts with ACTO/actophorin.

The protein resides in the cytoplasm. It is found in the cell projection. The protein localises to the phagocytic cup. Adapter protein which is required for phagocytosis and motility, probably by regulating actin cytoskeleton dynamics. During phagocytosis, plays a role in the initiation and/or formation of the phagocytic cup and is involved in the recruitment of the actin binding protein coactosin to the phagocytic cup. This Entamoeba histolytica (strain ATCC 30459 / HM-1:IMSS / ABRM) protein is 14-3-3 protein 3.